Here is a 421-residue protein sequence, read N- to C-terminus: BEN domain-containing protein 5 (421 aa).

Residue Lys133 is modified to N6-acetyllysine. Positions 180–243 (RALYEELLRN…LNRRLQDVLL (64 aa)) form a coiled coil. Residue Lys258 forms a Glycyl lysine isopeptide (Lys-Gly) (interchain with G-Cter in SUMO2) linkage. The 107-residue stretch at 302-408 (GSGIWVDEEK…EKIMDINKSC (107 aa)) folds into the BEN domain.

Its function is as follows. Acts as a transcriptional repressor. This Homo sapiens (Human) protein is BEN domain-containing protein 5 (BEND5).